The following is a 314-amino-acid chain: SERTA domain-containing protein 2 (314 aa).

The region spanning 33-80 (YTLQRQTIFNISLMKLYNHRPLTEPSLQKTVLINNMLRRIQEELKQEG) is the SERTA domain. 2 disordered regions span residues 77 to 119 (KQEG…HPCD) and 181 to 222 (PTST…SKLM). Polar residues predominate over residues 87-97 (TPSSQPTTEPS). Residues 182 to 193 (TSTSTEAATAAT) are compositionally biased toward low complexity. The segment covering 210–221 (GPQESRADDSKL) has biased composition (basic and acidic residues). Residues 235–311 (TGFLTDLTLD…TELDHIMEVL (77 aa)) form a required for transactivation activity region. A Nuclear export signal (NES) motif is present at residues 238–243 (LTDLTL).

Interacts with XPO1; which mediates nuclear export. Interacts with TFDP1; modulates transactivation activity of TFDP1/E2F complexes. Post-translationally, polyubiquitinated, which promotes proteasomal degradation. As to expression, expressed in adipose tissue.

The protein localises to the nucleus. The protein resides in the cytoplasm. Acts at E2F-responsive promoters as coregulator to integrate signals provided by PHD- and/or bromodomain-containing transcription factors. May act as coactivator as well as corepressor of E2F1-TFDP1 and E2F4-TFDP1 complexes on E2F consensus binding sites, which would activate or inhibit E2F-target genes expression. Modulates fat storage by down-regulating the expression of key genes involved in adipocyte lipolysis, thermogenesis and oxidative metabolism. In Homo sapiens (Human), this protein is SERTA domain-containing protein 2 (SERTAD2).